We begin with the raw amino-acid sequence, 444 residues long: Exodeoxyribonuclease 7 large subunit (444 aa).

It belongs to the XseA family. As to quaternary structure, heterooligomer composed of large and small subunits.

It localises to the cytoplasm. The catalysed reaction is Exonucleolytic cleavage in either 5'- to 3'- or 3'- to 5'-direction to yield nucleoside 5'-phosphates.. Bidirectionally degrades single-stranded DNA into large acid-insoluble oligonucleotides, which are then degraded further into small acid-soluble oligonucleotides. The protein is Exodeoxyribonuclease 7 large subunit of Pseudoalteromonas translucida (strain TAC 125).